Here is a 517-residue protein sequence, read N- to C-terminus: MLSSRAQAARTAADKALQRFLRTGAAVRYKVMKNWGVIGGIAAALAAGIYVIWGPITERKKRRKGLVPGLVNLGNTCFMNSLLQGLSACPAFVKWLEEFTTQYSRDQQGPHTHQCLSLTLLSLLKALSCQEVTEEEVLDASCLLDVLRMYRWQISSFEEQDAHELFHVITSSLEDERDRQPRVTHLFDVHSLEQQSEMAPRQVTCHTRGSPHPTTNPWKSQHPFHGRLSSNMVCKHCEHQSPVRFDTFDSLSLSIPAATWGHPLTLDHCLHHFISSESVRDVVCDNCTKIEAKGTQNGEKVEHQRTTFVKQLKLGKLPQCLCIHLQRLSWSSQGTPLKRHEHVQFNEFLMMDFYKYRLLGHKPSQHGPKATESPGSALGVQDTQAAPKPGLSQPAAPKTQFFMNGACSPSLLPALPSPMAFPLPVAPDYSSSMYLFRLMAVVVHHGDMHSGHFVTYRRSPPSAKNPLSTSNQWLWISDDTVRKASLQEVLSSSAYLLFYERVLSRVQQQGREYRSEE.

Residues 1-35 lie on the Mitochondrial intermembrane side of the membrane; that stretch reads MLSSRAQAARTAADKALQRFLRTGAAVRYKVMKNW. A helical membrane pass occupies residues 36–56; the sequence is GVIGGIAAALAAGIYVIWGPI. Over 57–517 the chain is Cytoplasmic; that stretch reads TERKKRRKGL…QQGREYRSEE (461 aa). The USP domain occupies 68 to 502; sequence PGLVNLGNTC…SAYLLFYERV (435 aa). Cys77 acts as the Nucleophile in catalysis. Residues Lys235 and Lys289 each participate in a glycyl lysine isopeptide (Lys-Gly) (interchain with G-Cter in ubiquitin) cross-link. The segment at 364–395 is disordered; it reads SQHGPKATESPGSALGVQDTQAAPKPGLSQPA. His452 (proton acceptor) is an active-site residue.

It belongs to the peptidase C19 family. Post-translationally, ubiquitinated by parkin (PRKN) at Lys-235 and Lys-289, leading to its degradation.

It localises to the mitochondrion outer membrane. The enzyme catalyses Thiol-dependent hydrolysis of ester, thioester, amide, peptide and isopeptide bonds formed by the C-terminal Gly of ubiquitin (a 76-residue protein attached to proteins as an intracellular targeting signal).. With respect to regulation, inhibited by the diterpenoid derivative 15-oxospiramilactone (S3). Its function is as follows. Deubiquitinating enzyme tethered to the mitochondrial outer membrane that acts as a key inhibitor of mitophagy by counteracting the action of parkin (PRKN): hydrolyzes ubiquitin attached by parkin on target proteins, such as RHOT1/MIRO1 and TOMM20, thereby blocking parkin's ability to drive mitophagy. Preferentially cleaves 'Lys-6'- and 'Lys-11'-linked polyubiquitin chains, 2 types of linkage that participate in mitophagic signaling. Does not cleave efficiently polyubiquitin phosphorylated at 'Ser-65'. Acts as a negative regulator of mitochondrial fusion by mediating deubiquitination of MFN1 and MFN2. In Rattus norvegicus (Rat), this protein is Ubiquitin carboxyl-terminal hydrolase 30 (Usp30).